A 345-amino-acid chain; its full sequence is Protein RecA (345 aa).

65–72 lines the ATP pocket; it reads GPESSGKT.

The protein belongs to the RecA family.

The protein localises to the cytoplasm. Its function is as follows. Can catalyze the hydrolysis of ATP in the presence of single-stranded DNA, the ATP-dependent uptake of single-stranded DNA by duplex DNA, and the ATP-dependent hybridization of homologous single-stranded DNAs. It interacts with LexA causing its activation and leading to its autocatalytic cleavage. The chain is Protein RecA from Sulfurimonas denitrificans (strain ATCC 33889 / DSM 1251) (Thiomicrospira denitrificans (strain ATCC 33889 / DSM 1251)).